The sequence spans 164 residues: uncharacterized protein (164 aa).

Residues 46–142 are disordered; sequence GRSPEQKEHV…APDNSIYDTL (97 aa).

This is an uncharacterized protein from Caenorhabditis elegans.